A 295-amino-acid polypeptide reads, in one-letter code: Proline iminopeptidase (295 aa).

The region spanning 29-279 (PLLLLHGGPG…GCGHMPFVQE (251 aa)) is the AB hydrolase-1 domain. Ser-107 (nucleophile) is an active-site residue. Asp-246 is a catalytic residue. His-273 acts as the Proton donor in catalysis.

Belongs to the peptidase S33 family.

It localises to the cell envelope. It carries out the reaction Release of N-terminal proline from a peptide.. Functionally, releases the N-terminal proline from various substrates. This chain is Proline iminopeptidase, found in Lactobacillus delbrueckii subsp. bulgaricus (strain ATCC 11842 / DSM 20081 / BCRC 10696 / JCM 1002 / NBRC 13953 / NCIMB 11778 / NCTC 12712 / WDCM 00102 / Lb 14).